The following is a 437-amino-acid chain: tRNA wybutosine-synthesizing protein 2 homolog (437 aa).

Residues Ser-208, Lys-215, Glu-255, and 283–284 (DN) each bind S-adenosyl-L-methionine. Residues 331–344 (SFSGKNPQPPGSSN) are compositionally biased toward polar residues. Residues 331–374 (SFSGKNPQPPGSSNMEKKHWPHPQKITTDKQGNRTTGSCMGEMS) form a disordered region.

Belongs to the class I-like SAM-binding methyltransferase superfamily. TRM5/TYW2 family.

The catalysed reaction is 4-demethylwyosine(37) in tRNA(Phe) + S-adenosyl-L-methionine = 4-demethyl-7-[(3S)-3-amino-3-carboxypropyl]wyosine(37) in tRNA(Phe) + S-methyl-5'-thioadenosine + H(+). It functions in the pathway tRNA modification; wybutosine-tRNA(Phe) biosynthesis. Functionally, S-adenosyl-L-methionine-dependent transferase that acts as a component of the wybutosine biosynthesis pathway. Wybutosine is a hyper modified guanosine with a tricyclic base found at the 3'-position adjacent to the anticodon of eukaryotic phenylalanine tRNA. Catalyzes the transfer of the alpha-amino-alpha-carboxypropyl (acp) group from S-adenosyl-L-methionine to the C-7 position of 4-demethylwyosine (imG-14) to produce wybutosine-86. The chain is tRNA wybutosine-synthesizing protein 2 homolog (Trmt12) from Rattus norvegicus (Rat).